The primary structure comprises 503 residues: Major facilitator superfamily domain-containing protein 4A (503 aa).

12 helical membrane passes run 19 to 39 (LTYW…GPTL), 53 to 73 (ITWV…LGGV), 82 to 102 (LFLL…IPFC), 105 to 125 (VGVL…IDTI), 139 to 159 (AIFL…SPLI), 214 to 234 (YAFW…FYLI), 289 to 309 (IWNA…TLFM), 338 to 358 (GYLP…SIPV), 366 to 386 (SMLF…LLSQ), 392 to 412 (MFVG…SMLA), 427 to 447 (VLVT…GSVM), and 455 to 475 (FLVC…VLLV). The segment at 484-503 (SEDSACKPPGLDGEATSYQS) is disordered.

This sequence belongs to the major facilitator superfamily.

Its subcellular location is the membrane. The polypeptide is Major facilitator superfamily domain-containing protein 4A (mfsd4a) (Xenopus tropicalis (Western clawed frog)).